Here is a 788-residue protein sequence, read N- to C-terminus: Endonuclease MutS2 (788 aa).

Residue glycine 332 to threonine 339 coordinates ATP. The Smr domain maps to valine 713 to lysine 788.

The protein belongs to the DNA mismatch repair MutS family. MutS2 subfamily. In terms of assembly, homodimer. Binds to stalled ribosomes, contacting rRNA.

Functionally, endonuclease that is involved in the suppression of homologous recombination and thus may have a key role in the control of bacterial genetic diversity. Its function is as follows. Acts as a ribosome collision sensor, splitting the ribosome into its 2 subunits. Detects stalled/collided 70S ribosomes which it binds and splits by an ATP-hydrolysis driven conformational change. Acts upstream of the ribosome quality control system (RQC), a ribosome-associated complex that mediates the extraction of incompletely synthesized nascent chains from stalled ribosomes and their subsequent degradation. Probably generates substrates for RQC. In Clostridium botulinum (strain 657 / Type Ba4), this protein is Endonuclease MutS2.